A 545-amino-acid chain; its full sequence is E3 ubiquitin-protein ligase ipaH9.8 (545 aa).

An interaction with target proteins region spans residues Met-1–Met-242. 8 LRR repeats span residues Asn-57 to Ala-77, Gln-78 to Leu-99, Lys-100 to Pro-117, Ala-118 to Leu-139, Leu-140 to Gln-157, Ala-158 to Asn-179, Val-182 to Leu-203, and Asn-205 to Thr-228. Positions Ser-243–Leu-250 are linker. The E3 ubiquitin-protein ligase catalytic domain stretch occupies residues His-251–Ser-545. Positions Pro-253–Ser-545 constitute an NEL domain. Catalysis depends on Cys-337, which acts as the Glycyl thioester intermediate.

It belongs to the LRR-containing bacterial E3 ligase family. Also interacts with human and mouse U2AF1 (U2AF35). Ubiquitinated in the presence of host E1 ubiquitin-activating enzyme, E2 ubiquitin-conjugating enzyme and ubiquitin.

Its subcellular location is the secreted. The protein localises to the host cytoplasm. It is found in the host nucleus. It catalyses the reaction S-ubiquitinyl-[E2 ubiquitin-conjugating enzyme]-L-cysteine + [acceptor protein]-L-lysine = [E2 ubiquitin-conjugating enzyme]-L-cysteine + N(6)-ubiquitinyl-[acceptor protein]-L-lysine.. Exists in an autoinhibited state in the absence of substrate protein, due to interactions of the leucine-rich repeats with NEL domain. Is activated upon binding to a substrate protein. In terms of biological role, effector E3 ubiquitin ligase that interferes with host's ubiquitination pathway and modulates the acute inflammatory responses, thus facilitating bacterial colonization within the host cell. Interacts with IKBKG (NEMO) and TNIP1 (ABIN-1), a ubiquitin-binding adapter protein, which results in TNIP1-dependent 'Lys-27'-linked polyubiquitination of IKBKG. Consequently, polyubiquitinated IKBKG undergoes proteasome-dependent degradation, which perturbs NF-kappa-B activation during bacterial infection. Mediates polyubiquitination of host U2AF1, leading to its proteasomal degradation. Catalyzes 'Lys-48'-linked polyubiquitination and subsequent degradation of a subset of host guanylate-binding proteins (GBP1, GBP2, GBP4 and GBP6), thereby suppressing host cell defense. In contrast, host GBP3 and GBP7 are not ubiquitinated by IpaH9.8. Uses UBE2D2 (UBCH5B) as an E2 ubiquitin-conjugating enzyme. This Shigella dysenteriae serotype 1 (strain Sd197) protein is E3 ubiquitin-protein ligase ipaH9.8 (ipaH9.8).